The chain runs to 189 residues: UPF0301 protein HRM2_24640 (189 aa).

It belongs to the UPF0301 (AlgH) family.

This Desulforapulum autotrophicum (strain ATCC 43914 / DSM 3382 / VKM B-1955 / HRM2) (Desulfobacterium autotrophicum) protein is UPF0301 protein HRM2_24640.